A 308-amino-acid chain; its full sequence is HTH-type transcriptional activator AllS (308 aa).

Residues 2–59 (FDPETLRTFIAVAETGSFSKAAERLCKTTATISYRIKLLEENTGVALFFRTTRSVTLT) form the HTH lysR-type domain. Positions 19–38 (FSKAAERLCKTTATISYRIK) form a DNA-binding region, H-T-H motif.

This sequence belongs to the LysR transcriptional regulatory family.

In terms of biological role, positive regulator essential for the expression of AllD operon. Binds to the AllD promoter. This chain is HTH-type transcriptional activator AllS (allS), found in Escherichia coli O157:H7.